Here is a 237-residue protein sequence, read N- to C-terminus: Cell division cycle-associated protein 4 (237 aa).

The 48-residue stretch at 26–73 (YSLQRQSLLDMSLVKLQLCHMLVEPNLCRSVLIANTVRQIQEEMSQDG) folds into the SERTA domain.

In terms of tissue distribution, expressed preferentially in hematopoietic progenitors and mature blood cells. Expressed at low levels in the heart, lung, spleen, and thymus and at a higher level in muscle.

Its subcellular location is the nucleus. Its function is as follows. May participate in the regulation of cell proliferation through the E2F/RB pathway. May be involved in molecular regulation of hematopoietic stem cells and progenitor cell lineage commitment and differentiation. This is Cell division cycle-associated protein 4 (Cdca4) from Mus musculus (Mouse).